Here is a 507-residue protein sequence, read N- to C-terminus: ATP synthase subunit alpha, mitochondrial (507 aa).

Residue 171–178 (GDRQTGKT) coordinates ATP.

Belongs to the ATPase alpha/beta chains family. In terms of assembly, F-type ATPases have 2 components, CF(1) - the catalytic core - and CF(0) - the membrane proton channel. CF(1) has five subunits: alpha(3), beta(3), gamma(1), delta(1), epsilon(1). CF(0) has three main subunits: a, b and c.

It is found in the mitochondrion. The protein localises to the mitochondrion inner membrane. Mitochondrial membrane ATP synthase (F(1)F(0) ATP synthase or Complex V) produces ATP from ADP in the presence of a proton gradient across the membrane which is generated by electron transport complexes of the respiratory chain. F-type ATPases consist of two structural domains, F(1) - containing the extramembraneous catalytic core, and F(0) - containing the membrane proton channel, linked together by a central stalk and a peripheral stalk. During catalysis, ATP synthesis in the catalytic domain of F(1) is coupled via a rotary mechanism of the central stalk subunits to proton translocation. Subunits alpha and beta form the catalytic core in F(1). Rotation of the central stalk against the surrounding alpha(3)beta(3) subunits leads to hydrolysis of ATP in three separate catalytic sites on the beta subunits. Subunit alpha does not bear the catalytic high-affinity ATP-binding sites. The chain is ATP synthase subunit alpha, mitochondrial (ATPA) from Raphanus sativus (Radish).